Reading from the N-terminus, the 952-residue chain is MRGRGNARSLLVQAVSLRPATWHPCLDMGHLHRPSSRTSHRNLPHVFLLFLFVGPFNCLASYSRATELLYSLNEGLPAGVLIGSLAEDLRLLPRASGRQNQQLLHPERTASEGNPPLSFSLASGGLSGQYVTLNNRSGELHTSAQEIDREALCLDGGGGAAWAGSTSIASSPSSDSCLLLLDVLVLPQEYFRFVKVKIAIRDINDNAPQFPISEISVWVPENSPVNTRLAIEHPAVDPDVGINGVQTYRLLDYHGMFTLDVEENENGERTPYLIVMGALDRETQDQYVSIIIAEDGGSPPLLGSATLTIGISDINDNCPLFIDSQINVTVYGNATVGTPVATVQAVDRDLGTNAQITYSYSQKVPQETKDLFHLDEVTGVIKLSSKIGGSVLQTHKLTILANGPGCIPAVITALVSIIKVVFRPPEIVPRYIANEVDGVVYLKELEPVNTPIAFFTIRDPEGKYKINCFLDGEGPFRLAPYKPYNNEYLLETTKPMDYEVQSFYEIAVVAWNSEGFHVKRIIKVQLLDDNDNAPVFLQPLIELTIEENNAPNAFLTKLYATDADSGEMGRVSYFLGPDAPSYFSLDSVTGILTVSTQLDREEKEKYRYTVRAVDCGTPPRESVATVALTVLDKNDNSPRFINKDFSFFVPENFPGYGEIGVISVTDADAGRNGWVALSVMNQSDIFVIDTGKGMLRAKVSLDREQQSSYTLWVEAVDGGEPALSSTTKITILLLDINDNPPLVLFPQSNMSYLLVLPSTLPGSPVTEVYAVDKDTGMNAVIAYSIIGRRGPRPESFRIDPKTGNITLEEALLQTDYGLHRLLVKVSDHGYPEPLHSTVMVNLFVNDTVSNESYIESLLRKEPEINIEEKEPQISIEPTHRKVESMSCMPTLVALSVISLGSITLVTGMGIYICLRKGKKHHREDDNLEVQIPLKGKIDLCMRERKPVDISNI.

The first 60 residues, 1–60 (MRGRGNARSLLVQAVSLRPATWHPCLDMGHLHRPSSRTSHRNLPHVFLLFLFVGPFNCLA), serve as a signal peptide directing secretion. Residues 61-891 (SYSRATELLY…VESMSCMPTL (831 aa)) are Extracellular-facing. Cadherin domains lie at 64–210 (RATE…APQF), 211–321 (PISE…CPLF), 322–536 (IDSQ…APVF), 537–640 (LQPL…SPRF), 641–743 (INKD…PPLV), and 747–864 (QSNM…EPEI). N-linked (GlcNAc...) asparagine glycosylation occurs at Asn-135. N-linked (GlcNAc...) asparagine glycosylation is found at Asn-327 and Asn-333. 5 N-linked (GlcNAc...) asparagine glycosylation sites follow: Asn-681, Asn-749, Asn-804, Asn-845, and Asn-850. A helical transmembrane segment spans residues 892–912 (VALSVISLGSITLVTGMGIYI). Residues 913 to 952 (CLRKGKKHHREDDNLEVQIPLKGKIDLCMRERKPVDISNI) lie on the Cytoplasmic side of the membrane.

The protein localises to the cell membrane. Functionally, potential calcium-dependent cell-adhesion protein. This is Protocadherin-20 (Pcdh20) from Mus musculus (Mouse).